The following is a 2050-amino-acid chain: Unconventional myosin-XVIIIa (2050 aa).

Basic and acidic residues-rich tracts occupy residues 1-17 (MFNL…GRKE) and 23-34 (EKKERMSAAELR). A disordered region spans residues 1–34 (MFNLMKKDKDKDGGRKEKKEKKEKKERMSAAELR). The tract at residues 1-398 (MFNLMKKDKD…LDVDEDDIEK (398 aa)) is mediates nucleotide-independent binding to F-actin and interaction with GOLPH3. Ser35, Ser52, Ser72, and Ser74 each carry phosphoserine. Thr79 is subject to Phosphothreonine. Ser83 and Ser98 each carry phosphoserine. Thr99 is subject to Phosphothreonine. Phosphoserine occurs at positions 102 and 103. Residues 114–118 (RGSVL) carry the Interaction with actin motif. A phosphoserine mark is found at Ser140, Ser145, Ser157, Ser160, Ser164, Ser234, and Ile340. Residues 140-167 (SFSQRSRDESASETSTPSEHSAAPSPQV) form a disordered region. In terms of domain architecture, PDZ spans 220 to 311 (ELELQRRPTG…SVRLKVQPIP (92 aa)). Residues 349–401 (TEKVWLVHRDGFSLASQLKSEELSLPEGKARVKLDHDGAILDVDEDDIEKANA) form the Myosin N-terminal SH3-like domain. Residues 405 to 1181 (DRLEDLASLV…TLARLEEQRD (777 aa)) enclose the Myosin motor domain. 498-505 (GSSGSGKT) is a binding site for ATP. A phosphoserine mark is found at Ser983, Ser1063, Ser1064, and Ser1066. Residues 1051–1071 (PGEPRSASSRRVSSSSELDLP) are disordered. Residues 1055-1066 (RSASSRRVSSSS) show a composition bias toward low complexity. The IQ domain maps to 1184-1213 (TSRHLTLFQAACRGYLARQHFKKRKIQDLA). Residues 1242–1967 (LIQVQLSEEQ…KKNKLEGDSD (726 aa)) are a coiled coil. The interval 1448–1477 (RNHELEKKQRRFDSELSQAHEETQREKLQR) is disordered. The residue at position 1636 (Ser1636) is a Phosphoserine. Residues 1848–1897 (MEKLTEERDQRAAAENREKEQNKRLQRQLRDTKEEMSELARKEAEASRKK) form a disordered region. Phosphoserine occurs at positions 1938, 1966, 1970, 1994, 1998, 2002, 2003, 2016, 2032, 2037, and 2039. The interval 1955–2050 (YQKKKNKLEG…TEAKLTETSA (96 aa)) is disordered. Thr2041 carries the phosphothreonine modification. A compositionally biased stretch (basic and acidic residues) spans 2041 to 2050 (TEAKLTETSA).

Belongs to the TRAFAC class myosin-kinesin ATPase superfamily. Myosin family. In terms of assembly, homodimer. Forms a tripartite complex with CDC42BPA/CDC42BPB and LURAP1 with the latter acting as an adapter connecting CDC42BPA/CDC42BPB and MYO18A. Binds F-actin; regulated by ADP and GOLPH3. Interacts with GOLPH3; the interaction is direct and may link Golgi membranes to the actin cytoskeleton. Interacts with JAK3. Interacts with MSR1 and CD14. Post-translationally, phosphorylated on tyrosine upon CSF1R activation. Isoform 6 is phosphorylated on Ser-340. Isoform 1; Expressed ubiquitously. Isoform 2: Specifically expressed in most hematopoietic cells. Isoform 3: Predominantly expressed in alveolar macrophages.

The protein resides in the golgi apparatus. It localises to the trans-Golgi network. Its subcellular location is the golgi outpost. The protein localises to the cytoplasm. It is found in the cytoskeleton. The protein resides in the microtubule organizing center. It localises to the endoplasmic reticulum-Golgi intermediate compartment. In terms of biological role, may link Golgi membranes to the cytoskeleton and participate in the tensile force required for vesicle budding from the Golgi. Thereby, may play a role in Golgi membrane trafficking and could indirectly give its flattened shape to the Golgi apparatus. Alternatively, in concert with LURAP1 and CDC42BPA/CDC42BPB, has been involved in modulating lamellar actomyosin retrograde flow that is crucial to cell protrusion and migration. May be involved in the maintenance of the stromal cell architectures required for cell to cell contact. Regulates trafficking, expression, and activation of innate immune receptors on macrophages. Plays a role to suppress inflammatory responsiveness of macrophages via a mechanism that modulates CD14 trafficking. Acts as a receptor of surfactant-associated protein A (SFTPA1/SP-A) and plays an important role in internalization and clearance of SFTPA1-opsonized S.aureus by alveolar macrophages. Strongly enhances natural killer cell cytotoxicity. In Mus musculus (Mouse), this protein is Unconventional myosin-XVIIIa (Myo18a).